We begin with the raw amino-acid sequence, 233 residues long: 2,3,4,5-tetrahydropyridine-2,6-dicarboxylate N-acetyltransferase (233 aa).

Belongs to the transferase hexapeptide repeat family. DapH subfamily.

The enzyme catalyses (S)-2,3,4,5-tetrahydrodipicolinate + acetyl-CoA + H2O = L-2-acetamido-6-oxoheptanedioate + CoA. The protein operates within amino-acid biosynthesis; L-lysine biosynthesis via DAP pathway; LL-2,6-diaminopimelate from (S)-tetrahydrodipicolinate (acetylase route): step 1/3. In terms of biological role, catalyzes the transfer of an acetyl group from acetyl-CoA to tetrahydrodipicolinate. In Thermotoga sp. (strain RQ2), this protein is 2,3,4,5-tetrahydropyridine-2,6-dicarboxylate N-acetyltransferase.